Consider the following 976-residue polypeptide: Vacuolar membrane protease (976 aa).

Residues 1–15 are Cytoplasmic-facing; it reads MKLKSVFRSVLKYRK. Residues 16–36 form a helical membrane-spanning segment; it reads TNLSLLLLITYSIITLLYIFD. At 37–359 the chain is on the vacuolar side; sequence HERYKLNLPK…KFFVISAKTL (323 aa). N-linked (GlcNAc...) asparagine glycosylation is found at Asn96 and Asn121. Residues His156 and Asp168 each coordinate Zn(2+). The N-linked (GlcNAc...) asparagine glycan is linked to Asn189. The active-site Proton acceptor is Glu200. Zn(2+) is bound at residue Glu201. 2 N-linked (GlcNAc...) asparagine glycosylation sites follow: Asn212 and Asn217. Residues Glu226 and His300 each contribute to the Zn(2+) site. Residues 360 to 380 form a helical membrane-spanning segment; that stretch reads FYWNCIFLLVSPVVAIGLYLI. The Cytoplasmic segment spans residues 381–392; the sequence is SRDRMTWKSHSW. Residues 393-412 form a helical membrane-spanning segment; sequence LSWTRFPLSLAAGIIVQKLF. The Vacuolar portion of the chain corresponds to 413-428; the sequence is SNDIIRSNPLTFSRNY. The chain crosses the membrane as a helical span at residues 429-449; that stretch reads FWPISAFFTQVIFTSYVLINC. At 450–461 the chain is on the cytoplasmic side; it reads SNFFFPCADMKS. The chain crosses the membrane as a helical span at residues 462–482; it reads LSIIELFIILWTILLFTSKLL. The Vacuolar portion of the chain corresponds to 483–496; it reads YSSDYRYTGLYPLS. Residues 497-517 form a helical membrane-spanning segment; that stretch reads IFFLLSTIAAILRLLALALGM. The Cytoplasmic segment spans residues 518–627; the sequence is RTRKRLGREC…NSLKLEYTDY (110 aa). A disordered region spans residues 528-610; sequence RDHHSNYSSH…PLLKGSNSME (83 aa). Residues 549–558 show a composition bias toward polar residues; it reads NLEQPQDQFT. A compositionally biased stretch (low complexity) spans 559–570; that stretch reads SSQDDQASIQDD. Basic and acidic residues predominate over residues 582–601; that stretch reads NVDEDHGMDSSSQQHDERVP. Residues 628–648 traverse the membrane as a helical segment; the sequence is AWIIQFLLIVPIPSFILFNSV. Topologically, residues 649-668 are vacuolar; the sequence is DVIMDALNHTVQEGSKATFD. N-linked (GlcNAc...) asparagine glycosylation is present at Asn656. A helical membrane pass occupies residues 669-689; it reads VLRFGMVGSILMALPILPFFY. Residues 690-692 are Cytoplasmic-facing; that stretch reads KVN. A helical membrane pass occupies residues 693–713; the sequence is YITISLTALLFLISASKTLLV. The Vacuolar portion of the chain corresponds to 714 to 976; that stretch reads HPFTNSNPLK…LVIVKDAIIL (263 aa). Residues Asn768, Asn796, Asn811, Asn866, and Asn937 are each glycosylated (N-linked (GlcNAc...) asparagine).

This sequence belongs to the peptidase M28 family. The cofactor is Zn(2+).

The protein resides in the vacuole membrane. Its function is as follows. May be involved in vacuolar sorting and osmoregulation. In Saccharomyces cerevisiae (strain RM11-1a) (Baker's yeast), this protein is Vacuolar membrane protease.